The chain runs to 199 residues: MTEKEKMLAEKWYDANFDQYLINERARAKDICFELNHTRPSATNKRKELIDQLFQTTTDNVSISIPFDTDYGWNVKLGKNVYVNTNCYFMDGGQITIGDNVFIGPNCGFYTATHPLNFHHRNEGFEKAGPIHIGSNTWFGGHVAVLPGVTIGEGSVIGAGSVVTKDIPPHSLAVGNPCKVVRKIDNDLPSETLNDETIK.

The protein belongs to the transferase hexapeptide repeat family.

The polypeptide is Putative acetyltransferase SACOL2570 (Staphylococcus aureus (strain COL)).